The primary structure comprises 226 residues: Thiamine-phosphate synthase (226 aa).

4-amino-2-methyl-5-(diphosphooxymethyl)pyrimidine-binding positions include Q46–K50 and D83. Mg(2+)-binding residues include D84 and D103. S122 contacts 4-amino-2-methyl-5-(diphosphooxymethyl)pyrimidine. T149–S151 lines the 2-[(2R,5Z)-2-carboxy-4-methylthiazol-5(2H)-ylidene]ethyl phosphate pocket. K152 provides a ligand contact to 4-amino-2-methyl-5-(diphosphooxymethyl)pyrimidine. Residues G181 and I201–T202 each bind 2-[(2R,5Z)-2-carboxy-4-methylthiazol-5(2H)-ylidene]ethyl phosphate.

The protein belongs to the thiamine-phosphate synthase family. The cofactor is Mg(2+).

It catalyses the reaction 2-[(2R,5Z)-2-carboxy-4-methylthiazol-5(2H)-ylidene]ethyl phosphate + 4-amino-2-methyl-5-(diphosphooxymethyl)pyrimidine + 2 H(+) = thiamine phosphate + CO2 + diphosphate. The enzyme catalyses 2-(2-carboxy-4-methylthiazol-5-yl)ethyl phosphate + 4-amino-2-methyl-5-(diphosphooxymethyl)pyrimidine + 2 H(+) = thiamine phosphate + CO2 + diphosphate. The catalysed reaction is 4-methyl-5-(2-phosphooxyethyl)-thiazole + 4-amino-2-methyl-5-(diphosphooxymethyl)pyrimidine + H(+) = thiamine phosphate + diphosphate. It functions in the pathway cofactor biosynthesis; thiamine diphosphate biosynthesis; thiamine phosphate from 4-amino-2-methyl-5-diphosphomethylpyrimidine and 4-methyl-5-(2-phosphoethyl)-thiazole: step 1/1. In terms of biological role, condenses 4-methyl-5-(beta-hydroxyethyl)thiazole monophosphate (THZ-P) and 2-methyl-4-amino-5-hydroxymethyl pyrimidine pyrophosphate (HMP-PP) to form thiamine monophosphate (TMP). The polypeptide is Thiamine-phosphate synthase (Haemophilus influenzae (strain PittGG)).